A 422-amino-acid chain; its full sequence is Serine hydroxymethyltransferase (422 aa).

Residues leucine 113 and glycine 117 to leucine 119 contribute to the (6S)-5,6,7,8-tetrahydrofolate site. Lysine 222 carries the N6-(pyridoxal phosphate)lysine modification.

Belongs to the SHMT family. Homodimer. Requires pyridoxal 5'-phosphate as cofactor.

Its subcellular location is the cytoplasm. It catalyses the reaction (6R)-5,10-methylene-5,6,7,8-tetrahydrofolate + glycine + H2O = (6S)-5,6,7,8-tetrahydrofolate + L-serine. Its pathway is one-carbon metabolism; tetrahydrofolate interconversion. It functions in the pathway amino-acid biosynthesis; glycine biosynthesis; glycine from L-serine: step 1/1. Functionally, catalyzes the reversible interconversion of serine and glycine with tetrahydrofolate (THF) serving as the one-carbon carrier. This reaction serves as the major source of one-carbon groups required for the biosynthesis of purines, thymidylate, methionine, and other important biomolecules. Also exhibits THF-independent aldolase activity toward beta-hydroxyamino acids, producing glycine and aldehydes, via a retro-aldol mechanism. The protein is Serine hydroxymethyltransferase of Amoebophilus asiaticus (strain 5a2).